A 571-amino-acid polypeptide reads, in one-letter code: Urease subunit alpha (571 aa).

Positions 132 to 571 constitute a Urease domain; the sequence is GGIDSHIHFI…LPMAQRYFLF (440 aa). His-137, His-139, and Lys-220 together coordinate Ni(2+). N6-carboxylysine is present on Lys-220. Residue His-222 coordinates substrate. Residues His-249 and His-275 each contribute to the Ni(2+) site. His-323 (proton donor) is an active-site residue. Asp-363 contributes to the Ni(2+) binding site.

The protein belongs to the metallo-dependent hydrolases superfamily. Urease alpha subunit family. Heterotrimer of UreA (gamma), UreB (beta) and UreC (alpha) subunits. Three heterotrimers associate to form the active enzyme. It depends on Ni cation as a cofactor. Post-translationally, carboxylation allows a single lysine to coordinate two nickel ions.

It localises to the cytoplasm. It catalyses the reaction urea + 2 H2O + H(+) = hydrogencarbonate + 2 NH4(+). It functions in the pathway nitrogen metabolism; urea degradation; CO(2) and NH(3) from urea (urease route): step 1/1. This Kocuria rhizophila (strain ATCC 9341 / DSM 348 / NBRC 103217 / DC2201) protein is Urease subunit alpha.